A 268-amino-acid polypeptide reads, in one-letter code: Imidazole glycerol phosphate synthase subunit HisF (268 aa).

Residues Asp12 and Asp131 contribute to the active site.

Belongs to the HisA/HisF family. Heterodimer of HisH and HisF.

The protein resides in the cytoplasm. The catalysed reaction is 5-[(5-phospho-1-deoxy-D-ribulos-1-ylimino)methylamino]-1-(5-phospho-beta-D-ribosyl)imidazole-4-carboxamide + L-glutamine = D-erythro-1-(imidazol-4-yl)glycerol 3-phosphate + 5-amino-1-(5-phospho-beta-D-ribosyl)imidazole-4-carboxamide + L-glutamate + H(+). It functions in the pathway amino-acid biosynthesis; L-histidine biosynthesis; L-histidine from 5-phospho-alpha-D-ribose 1-diphosphate: step 5/9. In terms of biological role, IGPS catalyzes the conversion of PRFAR and glutamine to IGP, AICAR and glutamate. The HisF subunit catalyzes the cyclization activity that produces IGP and AICAR from PRFAR using the ammonia provided by the HisH subunit. In Methanocorpusculum labreanum (strain ATCC 43576 / DSM 4855 / Z), this protein is Imidazole glycerol phosphate synthase subunit HisF.